The chain runs to 149 residues: MQVILLDKIAHLGNVGDQVSVKAGFARNFLIPQGKAVMATQANIEYFESRRAELERKAAEVLATAQARANQLAELATVTITSKAGDEGRLFGSITARDVAEAVTAAGVEIAKSEVRLSTGPLRTTGEHQVRFQLHGEVFATLNVVIVAE.

Belongs to the bacterial ribosomal protein bL9 family.

In terms of biological role, binds to the 23S rRNA. The chain is Large ribosomal subunit protein bL9 from Histophilus somni (strain 129Pt) (Haemophilus somnus).